The chain runs to 283 residues: Pantothenate synthetase (283 aa).

M33–H40 lines the ATP pocket. H40 functions as the Proton donor in the catalytic mechanism. Q64 lines the (R)-pantoate pocket. Residue Q64 coordinates beta-alanine. An ATP-binding site is contributed by G150 to D153. Q156 serves as a coordination point for (R)-pantoate. Residues I179 and M187–R190 contribute to the ATP site.

This sequence belongs to the pantothenate synthetase family. In terms of assembly, homodimer.

The protein localises to the cytoplasm. It carries out the reaction (R)-pantoate + beta-alanine + ATP = (R)-pantothenate + AMP + diphosphate + H(+). It functions in the pathway cofactor biosynthesis; (R)-pantothenate biosynthesis; (R)-pantothenate from (R)-pantoate and beta-alanine: step 1/1. Its function is as follows. Catalyzes the condensation of pantoate with beta-alanine in an ATP-dependent reaction via a pantoyl-adenylate intermediate. This is Pantothenate synthetase from Mesorhizobium japonicum (strain LMG 29417 / CECT 9101 / MAFF 303099) (Mesorhizobium loti (strain MAFF 303099)).